The sequence spans 155 residues: Histone H2B.5 (155 aa).

Basic and acidic residues-rich tracts occupy residues 1-28 (MAPK…EKAP) and 36-54 (EKRL…GKKD). Residues 1 to 63 (MAPKAEKKPA…DRAGRKKAKK (63 aa)) are disordered. N6-acetyllysine is present on residues K7 and K37. Residue K151 forms a Glycyl lysine isopeptide (Lys-Gly) (interchain with G-Cter in ubiquitin) linkage.

This sequence belongs to the histone H2B family. The nucleosome is a histone octamer containing two molecules each of H2A, H2B, H3 and H4 assembled in one H3-H4 heterotetramer and two H2A-H2B heterodimers. The octamer wraps approximately 147 bp of DNA. Can be acetylated to form H2BK6ac and H2BK33ac. Post-translationally, monoubiquitinated by BRE1 to form H2BK143ub1 and deubiquitinated by UBP26. Required for heterochromatic histone H3 di- and trimethylation at H3K4me. May give a specific tag for epigenetic transcriptional activation.

Its subcellular location is the nucleus. The protein localises to the chromosome. Functionally, core component of nucleosome. Nucleosomes wrap and compact DNA into chromatin, limiting DNA accessibility to the cellular machineries which require DNA as a template. Histones thereby play a central role in transcription regulation, DNA repair, DNA replication and chromosomal stability. DNA accessibility is regulated via a complex set of post-translational modifications of histones, also called histone code, and nucleosome remodeling. The protein is Histone H2B.5 (H2B.5) of Oryza sativa subsp. japonica (Rice).